A 225-amino-acid polypeptide reads, in one-letter code: Octanoyltransferase (225 aa).

The BPL/LPL catalytic domain maps to 37 to 217 (SDTPDEFWVV…ELASLIGYQT (181 aa)). Residues 76-83 (RGGQVTYH), 148-150 (SLG), and 161-163 (GLA) each bind substrate. C179 serves as the catalytic Acyl-thioester intermediate.

This sequence belongs to the LipB family.

The protein localises to the cytoplasm. The enzyme catalyses octanoyl-[ACP] + L-lysyl-[protein] = N(6)-octanoyl-L-lysyl-[protein] + holo-[ACP] + H(+). It functions in the pathway protein modification; protein lipoylation via endogenous pathway; protein N(6)-(lipoyl)lysine from octanoyl-[acyl-carrier-protein]: step 1/2. In terms of biological role, catalyzes the transfer of endogenously produced octanoic acid from octanoyl-acyl-carrier-protein onto the lipoyl domains of lipoate-dependent enzymes. Lipoyl-ACP can also act as a substrate although octanoyl-ACP is likely to be the physiological substrate. The polypeptide is Octanoyltransferase (Aeromonas salmonicida (strain A449)).